The primary structure comprises 654 residues: MSTLLQHAQIDWDDQGRPHSRQYDDVYFAINEGIDETLHVFIEQNQLRQRFAELKPHDCLVIGETGFGTGMNFFCAWQLFAELAPAGARLHFVSVEKYPLSRDDLARAMQLWPELAAFTQPLLEQYVAIHPGFQQFSLDGGQVTLNLMIGDALEQLPQLDARIDAWFLDGFAPAKNPDMWTPELFTQLARLSRPGTTLGTFTTTGWVRRSLIEAGFTMKKVPGIGKKWEVMHGVYTGAAAAPAAPWYARPTDLPGPREALVIGAGLAGSATARSLAERGWQVSVLERHAGPAQEASGNPQGVLYLKLSAHGTTLSQMILSGFGYTRRWLEHLQRGQDWDACGVLQLAFDDQEAARQAKLAAAFDESLLQRLEHDQAEAVAGIALASGGLFYPEGGWVHPPALCQAQLGHPNVRLLNHHEVIELRKVDGQWQAWDGERLLASAPLVVLAGAADVRRFPACAELPLKRIRGQITRLPATEASRALRTVVCADGYVAPPRGDEHTLGASFDFHNDDLTPTTAEHQGNLGLLEDISTDLATRLGCAELDAEQLEGRAAFRCTSPDYLPIVGPVADVQAFNTTYAMLAKDARQVPDIACPWLDGLYVNSGHGSRGLITAPLSGELIAAWACGEPLPVPRAVAEACHPNRFALRRLIRGK.

The segment at 1–236 (MSTLLQHAQI…KWEVMHGVYT (236 aa)) is tRNA (mnm(5)s(2)U34)-methyltransferase. The segment at 262 to 654 (IGAGLAGSAT…FALRRLIRGK (393 aa)) is FAD-dependent cmnm(5)s(2)U34 oxidoreductase.

The protein in the N-terminal section; belongs to the methyltransferase superfamily. tRNA (mnm(5)s(2)U34)-methyltransferase family. In the C-terminal section; belongs to the DAO family. It depends on FAD as a cofactor.

Its subcellular location is the cytoplasm. It carries out the reaction 5-aminomethyl-2-thiouridine(34) in tRNA + S-adenosyl-L-methionine = 5-methylaminomethyl-2-thiouridine(34) in tRNA + S-adenosyl-L-homocysteine + H(+). Its function is as follows. Catalyzes the last two steps in the biosynthesis of 5-methylaminomethyl-2-thiouridine (mnm(5)s(2)U) at the wobble position (U34) in tRNA. Catalyzes the FAD-dependent demodification of cmnm(5)s(2)U34 to nm(5)s(2)U34, followed by the transfer of a methyl group from S-adenosyl-L-methionine to nm(5)s(2)U34, to form mnm(5)s(2)U34. The polypeptide is tRNA 5-methylaminomethyl-2-thiouridine biosynthesis bifunctional protein MnmC (Pseudomonas entomophila (strain L48)).